The following is a 159-amino-acid chain: Nucleoside diphosphate kinase (159 aa).

K13, F61, R89, T95, R106, and N116 together coordinate ATP. H119 (pros-phosphohistidine intermediate) is an active-site residue.

The protein belongs to the NDK family. It depends on Mg(2+) as a cofactor.

The protein localises to the cytoplasm. It carries out the reaction a 2'-deoxyribonucleoside 5'-diphosphate + ATP = a 2'-deoxyribonucleoside 5'-triphosphate + ADP. The catalysed reaction is a ribonucleoside 5'-diphosphate + ATP = a ribonucleoside 5'-triphosphate + ADP. Functionally, major role in the synthesis of nucleoside triphosphates other than ATP. The ATP gamma phosphate is transferred to the NDP beta phosphate via a ping-pong mechanism, using a phosphorylated active-site intermediate. This Halorubrum lacusprofundi (strain ATCC 49239 / DSM 5036 / JCM 8891 / ACAM 34) protein is Nucleoside diphosphate kinase.